The sequence spans 78 residues: MSRRKREDPWRYEAAIAEVESLIAQIESGELDLAEVVERFQQAAQTLKRCAEFLEEKRQQVEILIEELNQDDEDWQAF.

The protein belongs to the XseB family. In terms of assembly, heterooligomer composed of large and small subunits.

Its subcellular location is the cytoplasm. It catalyses the reaction Exonucleolytic cleavage in either 5'- to 3'- or 3'- to 5'-direction to yield nucleoside 5'-phosphates.. Functionally, bidirectionally degrades single-stranded DNA into large acid-insoluble oligonucleotides, which are then degraded further into small acid-soluble oligonucleotides. The sequence is that of Exodeoxyribonuclease 7 small subunit from Synechococcus sp. (strain JA-3-3Ab) (Cyanobacteria bacterium Yellowstone A-Prime).